We begin with the raw amino-acid sequence, 680 residues long: 1-deoxy-D-xylulose-5-phosphate synthase (680 aa).

Thiamine diphosphate is bound by residues His-113 and 154–156; that span reads GHS. Asp-185 lines the Mg(2+) pocket. Thiamine diphosphate is bound by residues 186–187, Asn-214, Phe-323, and Glu-408; that span reads GA. Residue Asn-214 participates in Mg(2+) binding.

This sequence belongs to the transketolase family. DXPS subfamily. In terms of assembly, homodimer. Mg(2+) is required as a cofactor. The cofactor is thiamine diphosphate.

The enzyme catalyses D-glyceraldehyde 3-phosphate + pyruvate + H(+) = 1-deoxy-D-xylulose 5-phosphate + CO2. The protein operates within metabolic intermediate biosynthesis; 1-deoxy-D-xylulose 5-phosphate biosynthesis; 1-deoxy-D-xylulose 5-phosphate from D-glyceraldehyde 3-phosphate and pyruvate: step 1/1. Functionally, catalyzes the acyloin condensation reaction between C atoms 2 and 3 of pyruvate and glyceraldehyde 3-phosphate to yield 1-deoxy-D-xylulose-5-phosphate (DXP). The protein is 1-deoxy-D-xylulose-5-phosphate synthase of Psychrobacter arcticus (strain DSM 17307 / VKM B-2377 / 273-4).